The primary structure comprises 151 residues: Probable calcium-binding protein CML31 (151 aa).

4 consecutive EF-hand domains span residues 14 to 42 (ALFATFDHDGDGRISAAELRLCMKTTLGE), 44 to 79 (VSDEEAGQLVASVDADGDGLLCEAEFVRLVQAAEVE), 84 to 119 (RRGTGLREAFGMYEMEGEGCITPTSLRRMLRRLGSD), and 120 to 151 (QDIDDCRAMICRFDLNGDGVLSFDEFKIMMNA). Ca(2+)-binding residues include Asp20, Asp22, Asp24, Arg26, Glu31, Asp57, Asp59, Asp61, and Glu68. Asp133, Asn135, Asp137, and Glu144 together coordinate Ca(2+).

Potential calcium sensor. In Oryza sativa subsp. japonica (Rice), this protein is Probable calcium-binding protein CML31 (CML31).